The following is a 185-amino-acid chain: Segregation and condensation protein B (185 aa).

This sequence belongs to the ScpB family. In terms of assembly, homodimer. Homodimerization may be required to stabilize the binding of ScpA to the Smc head domains. Component of a cohesin-like complex composed of ScpA, ScpB and the Smc homodimer, in which ScpA and ScpB bind to the head domain of Smc. The presence of the three proteins is required for the association of the complex with DNA.

Its subcellular location is the cytoplasm. Participates in chromosomal partition during cell division. May act via the formation of a condensin-like complex containing Smc and ScpA that pull DNA away from mid-cell into both cell halves. This chain is Segregation and condensation protein B, found in Alkaliphilus oremlandii (strain OhILAs) (Clostridium oremlandii (strain OhILAs)).